The primary structure comprises 335 residues: Mevalonate kinase (335 aa).

ATP is bound at residue 111-121 (PVGAGLGSSAA). The Proton acceptor role is filled by aspartate 162.

This sequence belongs to the GHMP kinase family. Mevalonate kinase subfamily. Homodimer. Requires Mg(2+) as cofactor.

It localises to the cytoplasm. It carries out the reaction (R)-mevalonate + ATP = (R)-5-phosphomevalonate + ADP + H(+). Its pathway is isoprenoid biosynthesis; isopentenyl diphosphate biosynthesis via mevalonate pathway; isopentenyl diphosphate from (R)-mevalonate: step 1/3. Its function is as follows. Catalyzes the phosphorylation of (R)-mevalonate (MVA) to (R)-mevalonate 5-phosphate (MVAP). Functions in the mevalonate (MVA) pathway leading to isopentenyl diphosphate (IPP), a key precursor for the biosynthesis of isoprenoid compounds such as archaeal membrane lipids. The sequence is that of Mevalonate kinase from Pyrococcus horikoshii (strain ATCC 700860 / DSM 12428 / JCM 9974 / NBRC 100139 / OT-3).